The chain runs to 175 residues: Alpha-crystallin B chain (175 aa).

Methionine 1 is modified (N-acetylmethionine). Serine 19 carries the phosphoserine modification. Serine 41 is a glycosylation site (O-linked (GlcNAc) serine). Residues serine 45 and serine 59 each carry the phosphoserine modification. The region spanning 56-164 (RAPSWIDTGL…PERTIPITRE (109 aa)) is the sHSP domain. Histidine 83 is a Zn(2+) binding site. Residue lysine 92 is modified to N6-acetyllysine. Residues histidine 104, glutamate 106, histidine 111, and histidine 119 each contribute to the Zn(2+) site. A disordered region spans residues 142–175 (VLTVNGPRRQASGPERTIPITREEKPAVTAAPKK). At lysine 166 the chain carries N6-acetyllysine. Threonine 170 carries O-linked (GlcNAc) threonine glycosylation.

Belongs to the small heat shock protein (HSP20) family. Heteromer composed of three CRYAA and one CRYAB subunits. Aggregates with homologous proteins, including the small heat shock protein HSPB1, to form large heteromeric complexes. Inter-subunit bridging via zinc ions enhances stability, which is crucial as there is no protein turn over in the lens. Interacts with HSPBAP1 and TTN/titin. Interacts with TMEM109; in the cellular response to DNA damage. Interacts with DES; binds rapidly during early stages of DES filament assembly and a reduced binding seen in the later stages. Interacts with TMED10; the interaction mediates the translocation from the cytoplasm into the ERGIC (endoplasmic reticulum-Golgi intermediate compartment) and thereby secretion. Interacts with ATP6V1A and with MTOR, forming a ternary complex.

The protein resides in the cytoplasm. It is found in the nucleus. Its subcellular location is the secreted. It localises to the lysosome. Its function is as follows. May contribute to the transparency and refractive index of the lens. Has chaperone-like activity, preventing aggregation of various proteins under a wide range of stress conditions. In lens epithelial cells, stabilizes the ATP6V1A protein, preventing its degradation by the proteasome. In Sus scrofa (Pig), this protein is Alpha-crystallin B chain (CRYAB).